A 297-amino-acid polypeptide reads, in one-letter code: MSTFPASLLILNGKGANEPQLREAVNLLRDEGIDIHVRVTWEKGDAVRFIDEALQLNVETVIAGGGDGTINEVATALVERGSKMALGILPLGTANDFATSVGIPQDLASALKLAIVGRDVPIDIARVNDKTGFINMATGGFGTRITTETPEKLKAALGGVSYLIHGLMRMDTLKPDRCEIRGENFHWQGDALVIGIGNGRQAGGGQQLCPEALINDGLLHLRIFTGEELIPALFSTLANPENSPNIVDGVSSWFEITAPHEMTFNLDGEPLSGKTFRMELLPAALRCRLPPDCPLLR.

The 130-residue stretch at 2–131 (STFPASLLIL…IDIARVNDKT (130 aa)) folds into the DAGKc domain. Residues threonine 40, 66-72 (GDGTINE), and threonine 93 contribute to the ATP site. 3 residues coordinate Mg(2+): leucine 213, aspartate 216, and leucine 218. Glutamate 269 (proton acceptor) is an active-site residue.

This sequence belongs to the diacylglycerol/lipid kinase family. YegS lipid kinase subfamily. Requires Mg(2+) as cofactor. It depends on Ca(2+) as a cofactor.

It localises to the cytoplasm. Its function is as follows. Probably phosphorylates lipids; the in vivo substrate is unknown. This chain is Probable lipid kinase YegS-like, found in Klebsiella pneumoniae (strain 342).